Here is a 247-residue protein sequence, read N- to C-terminus: MyoD family inhibitor domain-containing protein (247 aa).

2 disordered regions span residues 1–67 (MSCA…NPSA) and 80–110 (QLQTSAQEPGKEETGKIKNGGHTRMSNGNGI). Positions 74–247 (QPERLPQLQT…MECCGICFPS (174 aa)) constitute an MDFI domain. Residues Ser-129 and Ser-141 each carry the phosphoserine modification.

The protein belongs to the MDFI family. As to quaternary structure, interacts with HAND1; the interaction sequesters Hand1 into the nucleolus and inhibits its activity. Interacts (via C-terminus) with ZIC2. Interacts (via C-terminus) with AXIN1, the histidine-rich region of CCNT1/cyclin-T and weakly with LEF1. Interacts with CCNT2. Interacts with GATA2. Interacts (via C-terminus) with Piezo channel composed of PIEZO1 or PIEZO2; the interaction prolongs Piezo channel inactivation. Post-translationally, palmitoylated. As to expression, in the embryo, robust expression is detected between 16.5 and 18.5 dpc in lung, kidney, and salivary glands. In the developing cardiovascular system, it is detected in lymphatic and cardiac valves (at protein level).

The protein resides in the cytoplasm. It localises to the secreted. In terms of biological role, required to control the activity of various transcription factors through their sequestration in the cytoplasm. Retains nuclear Zic proteins ZIC1, ZIC2 and ZIC3 in the cytoplasm and inhibits their transcriptional activation. Modulates the expression from cellular promoters. Binds to the axin complex, resulting in an increase in the level of free beta-catenin. Affects axin-regulation of the WNT and JNK signaling pathways. Involved in the development of lymphatic vessel valves. Required to promote lymphatic endothelial cell migration, in a process that involves down-regulation of integrin beta 1 activation and control of cell adhesion to the extracellular matrix. Regulates the activity of mechanosensitive Piezo channel. The protein is MyoD family inhibitor domain-containing protein of Mus musculus (Mouse).